The sequence spans 594 residues: MTRGLELLIAQTILQGFDAQYGRFLEVTSGAQQRFEQADWHAVQQAMKQRIHLYDHHVGLVVEQLRCITEGKSTDVDFLLRVKQQYTQLLPDYPRFEIAESFFNSVYCRLFDHRSLTPERLFIFSSQPERPFRTLPRPLAKDFFPERGWSHLLGKVLSDLPLRLAWQNKARDIGYIIASLQEALGEELLATCHLQVANELFYRNKAAWLVGKLVMPMATLPFLLPIHRSDEGELFVDTCLTTHAEASIVFGFARSYFMVYAPLPGALVEWLREILPGKTTAELYMAIGCQKHAKTESYREYLHYITRCDEQFIEAPGIRGMVMLVFTLPGFDRVFKVIKDRFAPQKEVTAAHVRACYQLVKEHDRVGRMADTQEFENFVLDKRQIAPGLLALLQAEAGNKLTDLGDRIVISHLYIERRMVPLNLWLEQVNGQALRDAVEEYGNAIRQLAAANIFPGDMLFKNFGVTRHGRVVFYDYDEICYMTEVNFRQIPPPRYPEDELASEPWYSVSPGDVFPEEFRHWLCADPRIGPLFEEMHADLLRADYWRELQTRIKNGHVEDVYAYRRKQRFSVRYGADSRPDKVFTPPSGRVRRSA.

Residues 315-321 (APGIRGM) and Lys-336 contribute to the ATP site. Asp-371 is an active-site residue.

This sequence belongs to the AceK family.

The protein resides in the cytoplasm. It carries out the reaction L-seryl-[isocitrate dehydrogenase] + ATP = O-phospho-L-seryl-[isocitrate dehydrogenase] + ADP + H(+). Bifunctional enzyme which can phosphorylate or dephosphorylate isocitrate dehydrogenase (IDH) on a specific serine residue. This is a regulatory mechanism which enables bacteria to bypass the Krebs cycle via the glyoxylate shunt in response to the source of carbon. When bacteria are grown on glucose, IDH is fully active and unphosphorylated, but when grown on acetate or ethanol, the activity of IDH declines drastically concomitant with its phosphorylation. This chain is Isocitrate dehydrogenase kinase/phosphatase, found in Klebsiella pneumoniae (strain 342).